The primary structure comprises 301 residues: GTPase Era (301 aa).

The Era-type G domain occupies 4–173; it reads KAGFVALIGK…LECISKHLIP (170 aa). The tract at residues 12–19 is G1; it reads GKPNAGKS. 12-19 is a GTP binding site; that stretch reads GKPNAGKS. The interval 38–42 is G2; that stretch reads NATRK. The tract at residues 64–67 is G3; sequence DTPG. GTP is bound by residues 64–68 and 122–125; these read DTPGL and SKID. Residues 122–125 form a G4 region; it reads SKID. The G5 stretch occupies residues 152–154; it reads LSA. One can recognise a KH type-2 domain in the interval 204-280; the sequence is LSDEIPYESD…FLNLQVIAQK (77 aa).

This sequence belongs to the TRAFAC class TrmE-Era-EngA-EngB-Septin-like GTPase superfamily. Era GTPase family. Monomer.

The protein localises to the cytoplasm. Its subcellular location is the cell inner membrane. Functionally, an essential GTPase that binds both GDP and GTP, with rapid nucleotide exchange. Plays a role in 16S rRNA processing and 30S ribosomal subunit biogenesis and possibly also in cell cycle regulation and energy metabolism. The sequence is that of GTPase Era from Helicobacter pylori (strain HPAG1).